Consider the following 222-residue polypeptide: Large ribosomal subunit protein uL4 (222 aa).

Positions 67 to 87 (QKGTGNARAGSKRTNVRRGGG) are disordered.

Belongs to the universal ribosomal protein uL4 family. Part of the 50S ribosomal subunit.

Its function is as follows. One of the primary rRNA binding proteins, this protein initially binds near the 5'-end of the 23S rRNA. It is important during the early stages of 50S assembly. It makes multiple contacts with different domains of the 23S rRNA in the assembled 50S subunit and ribosome. In terms of biological role, forms part of the polypeptide exit tunnel. The chain is Large ribosomal subunit protein uL4 from Rhodopirellula baltica (strain DSM 10527 / NCIMB 13988 / SH1).